Reading from the N-terminus, the 487-residue chain is mRNA cleavage and polyadenylation factor CLP1 (487 aa).

ATP-binding positions include E19, K59, and 134-139 (NSGKTT).

Belongs to the Clp1 family. Clp1 subfamily. In terms of assembly, component of a pre-mRNA cleavage factor complex. Interacts directly with PCF11.

The protein resides in the nucleus. Its function is as follows. Required for endonucleolytic cleavage during polyadenylation-dependent pre-mRNA 3'-end formation. The sequence is that of mRNA cleavage and polyadenylation factor CLP1 from Laccaria bicolor (strain S238N-H82 / ATCC MYA-4686) (Bicoloured deceiver).